A 154-amino-acid chain; its full sequence is Ascorbate-specific PTS system EIIA component (154 aa).

One can recognise a PTS EIIA type-2 domain in the interval 6 to 150 (SLAENNSIRL…QEVLDLIDRT (145 aa)). His68 functions as the Tele-phosphohistidine intermediate in the catalytic mechanism. His68 carries the post-translational modification Phosphohistidine.

It is found in the cytoplasm. Functionally, the phosphoenolpyruvate-dependent sugar phosphotransferase system (sugar PTS), a major carbohydrate active transport system, catalyzes the phosphorylation of incoming sugar substrates concomitantly with their translocation across the cell membrane. The enzyme II UlaABC PTS system is involved in ascorbate transport. This is Ascorbate-specific PTS system EIIA component (ulaC) from Salmonella choleraesuis (strain SC-B67).